The following is a 3704-amino-acid chain: Fatty acid synthase 2 (3704 aa).

The segment covering 27-41 has biased composition (low complexity); the sequence is AVSAHGSPPSSASPG. The segment at 27–52 is disordered; it reads AVSAHGSPPSSASPGPDDKAFSVDGT. The segment at 216–475 is acetyltransferase (AT) domain; the sequence is ALFGGQGNNH…QARIPFSKRK (260 aa). The tract at residues 639–887 is enoyl reductase (ER) domain; sequence SRLLGKPPIM…LIASTQGCSD (249 aa). Residues 1216 to 1709 form a dehydratase (DH) domain region; that stretch reads GEQPSWIRAL…VPGDQLSVQL (494 aa). The 107-residue stretch at 1624 to 1730 folds into the MaoC-like domain; that stretch reads PKTNEPYSRA…VQIDASNQRG (107 aa). Residues 1747-2112 are malonyl/palmitoyl transferase (MT/PT) domain; it reads YVFTGQGSQA…IEHVSEVTRS (366 aa). Positions 2265–2343 constitute a Carrier domain; sequence DERLDPLLTV…AALRPGYSGE (79 aa). O-(pantetheine 4'-phosphoryl)serine is present on serine 2303. Positions 2733–2969 are ketoreductase (KR) domain; sequence GLDVLLTGVG…LGLVEPEFAS (237 aa). One can recognise a Ketosynthase family 3 (KS3) domain in the interval 3176–3623; sequence QQEIELTHDL…QVGGIAMILH (448 aa). Catalysis depends on for beta-ketoacyl synthase activity residues cysteine 3359, histidine 3506, and histidine 3547.

The protein in the N-terminal section; belongs to the fungal fatty acid synthetase subunit beta family. In the C-terminal section; belongs to the thiolase-like superfamily. Fungal fatty acid synthetase subunit alpha family.

It functions in the pathway secondary metabolite biosynthesis. Fatty acid synthase; part of the gene cluster that mediates the biosynthesis of the glycolipid biosurfactant ustilagic acid (UA). UA is a secreted cellobiose glycolipid that is toxic for many microorganisms and confers biocontrol activity to U.maydis. UA consists of 15,16-dihydroxypalmitic or 2,15,16-trihydroxypalmitic acid, which is O-glycosidically linked to cellobiose at its terminal hydroxyl group. In addition, the cellobiose moiety is acetylated and acylated with a short-chain hydroxy fatty acid. UA biosynthesis starts with omega-hydroxylation of palmitic acid catalyzed by the cytochrome P450 monooxygenase cyp1. Terminal hydroxylation of palmitic acid precedes subterminal hydroxylation catalyzed by the cytochrome P450 monooxygenase cyp2. Sequential glucosylation of the hydroxy fatty acid is probably catalyzed by the glycosyltransferase ugt1. The cellobiose lipid is further decorated by acetylation of the proximal glucose residue and by acylation with a short-chain beta-hydroxy fatty acid at the distal glucose residue. The acyltransferase uat1 may be a good candidate for catalyzing either acetylation or acylation of the cellobiose lipid. The fatty acid synthase fas2 may be involved in synthesis of the carbon backbone of the short-chain beta-hydroxy fatty acid esterified to the cellobiose disaccharide. The secreted UA consists of a mixture of both alpha-hydroxylated and non-hydroxylated glycolipids; therefore, alpha-hydroxylation of the long-chain fatty, catalyzed by the fatty acid hydroxylase ahd1, occurs late in UA biosynthesis and may be the last step before secretion. This chain is Fatty acid synthase 2, found in Mycosarcoma maydis (Corn smut fungus).